A 58-amino-acid polypeptide reads, in one-letter code: Large ribosomal subunit protein bL32 (58 aa).

Belongs to the bacterial ribosomal protein bL32 family.

This Prochlorococcus marinus (strain MIT 9303) protein is Large ribosomal subunit protein bL32.